A 478-amino-acid chain; its full sequence is Putative sulfate transporter YbaR (478 aa).

A run of 12 helical transmembrane segments spans residues 19–39 (ILAG…FSII), 42–62 (VDPM…SIFG), 65–85 (PGMI…LVAD), 87–107 (GLQY…ILGI), 121–141 (VMIG…LPQF), 143–163 (GASW…YVLP), 168–188 (AVPS…TFHV), 220–240 (IIFP…LLTA), 259–279 (GQGI…CAMI), 295–315 (SAFV…HVVV), 345–365 (APLT…VTDD), and 366–386 (LSKG…AKIS). One can recognise an STAS domain in the interval 389–478 (KIVSHAEDQK…ASKSLMKQMA (90 aa)).

The protein belongs to the SLC26A/SulP transporter (TC 2.A.53) family.

It is found in the cell membrane. This chain is Putative sulfate transporter YbaR (ybaR), found in Bacillus subtilis (strain 168).